The sequence spans 257 residues: HTH-type transcriptional activator mta (257 aa).

An HTH merR-type domain is found at 2-71 (KYQVKQVAEI…LDEIKEMLDH (70 aa)). The H-T-H motif DNA-binding region spans 5–24 (VKQVAEISGVSIRTLHHYDN). Residues 71–74 (HPNF) form a hinge region. The essential for dimerization stretch occupies residues 76–104 (RKAALQSQKEILMKKKQRMDEMIQTIDRT). Residues 76–107 (RKAALQSQKEILMKKKQRMDEMIQTIDRTLLS) are a coiled coil.

In terms of assembly, homodimer.

The protein localises to the cytoplasm. Its function is as follows. Global transcriptional regulator that activates transcription of bmr and blt by binding directly to their promoter. Also stimulates the expression of the mta gene itself, ydfK and ymfE. This Bacillus subtilis (strain 168) protein is HTH-type transcriptional activator mta (mta).